The chain runs to 138 residues: Acidic phospholipase A2 CH-E6' (138 aa).

The N-terminal stretch at 1 to 16 (MRTLWIVAVLLLGVEG) is a signal peptide. Intrachain disulfides connect Cys42-Cys131, Cys44-Cys60, Cys59-Cys111, Cys65-Cys138, Cys66-Cys104, Cys73-Cys97, and Cys91-Cys102. 3 residues coordinate Ca(2+): Tyr43, Gly45, and Gly47. His63 is an active-site residue. Asp64 provides a ligand contact to Ca(2+). The active site involves Asp105.

This sequence belongs to the phospholipase A2 family. Group II subfamily. D49 sub-subfamily. Ca(2+) is required as a cofactor. In terms of tissue distribution, expressed by the venom gland.

It localises to the secreted. The enzyme catalyses a 1,2-diacyl-sn-glycero-3-phosphocholine + H2O = a 1-acyl-sn-glycero-3-phosphocholine + a fatty acid + H(+). Functionally, snake venom phospholipase A2 (PLA2) that shows high lipolytic and weak ADP-induced platelet aggregation activities. Also shows weak anticoagulant activity. PLA2 catalyzes the calcium-dependent hydrolysis of the 2-acyl groups in 3-sn-phosphoglycerides. This is Acidic phospholipase A2 CH-E6' from Crotalus horridus (Timber rattlesnake).